The primary structure comprises 78 residues: Exodeoxyribonuclease 7 small subunit (78 aa).

The protein belongs to the XseB family. Heterooligomer composed of large and small subunits.

The protein localises to the cytoplasm. It carries out the reaction Exonucleolytic cleavage in either 5'- to 3'- or 3'- to 5'-direction to yield nucleoside 5'-phosphates.. Its function is as follows. Bidirectionally degrades single-stranded DNA into large acid-insoluble oligonucleotides, which are then degraded further into small acid-soluble oligonucleotides. This Oceanobacillus iheyensis (strain DSM 14371 / CIP 107618 / JCM 11309 / KCTC 3954 / HTE831) protein is Exodeoxyribonuclease 7 small subunit.